The chain runs to 224 residues: A-type ATP synthase subunit D (224 aa).

Basic and acidic residues predominate over residues 200-209; sequence KKVKDKKEAQ. The tract at residues 200-224 is disordered; that stretch reads KKVKDKKEAQEEAADEAAAAESTGA. The span at 215-224 shows a compositional bias: low complexity; the sequence is EAAAAESTGA.

The protein belongs to the V-ATPase D subunit family. In terms of assembly, has multiple subunits with at least A(3), B(3), C, D, E, F, H, I and proteolipid K(x).

It is found in the cell membrane. Its function is as follows. Component of the A-type ATP synthase that produces ATP from ADP in the presence of a proton gradient across the membrane. This is A-type ATP synthase subunit D from Halobacterium salinarum (strain ATCC 29341 / DSM 671 / R1).